The following is a 140-amino-acid chain: Putative esterase MT1895 (140 aa).

This sequence belongs to the thioesterase PaaI family.

This Mycobacterium tuberculosis (strain CDC 1551 / Oshkosh) protein is Putative esterase MT1895.